A 1290-amino-acid polypeptide reads, in one-letter code: MEIQQTHRKINRPLVSLALVGALVSITPQQSHAAFFTTVIIPAIVGGIATGAAVGTVSGLLGWGLKQAEEANKTPDKPDKVWRIQAGKGFNEFPNKEYDLYRSLLSSKIDGGWDWGNAATHYWVKGGQWNKLEVDMKDAVGTYNLSGLRNFTGGDLDVNMQKATLRLGQFNGNSFTSYKDSADRTTRVDFNAKNILIDNFLEINNRVGSGAGRKASSTVLTLQASEGITSSKNAEISLYDGATLNLASNSVKLMGNVWMGRLQYVGAYLAPSYSTINTSKVTGEVNFNHLTVGDHNAAQAGIIASNKTHIGTLDLWQSAGLNIIAPPEGGYKDKPKDKPSNTTQNNANNNQQNSAQNNSNTQVINPPNSAQKTEIQPTQVIDGPFAGGKDTVVNIDRINTNADGTIKVGGYKASLTTNAAHLHIGKGGINLSNQASGRTLLVENLTGNITVDGPLRVNNQVGGYALAGSSANFEFKAGTDTKNGTATFNNDISLGRFVNLKVDAHTANFKGIDTGNGGFNTLDFSGVTGKVNINKLITASTNVAVKNFNINELVVKTNGVSVGEYTHFSEDIGSQSRINTVRLETGTRSIFSGGVKFKSGEKLVIDEFYYSPWNYFDARNIKNVEITRKFASSTPENPWGTSKLMFNNLTLGQNAVMDYSQFSNLTIQGDFINNQGTINYLVRGGQVATLNVGNAAAMFFSNNVDSATGFYQPLMKINSAQDLIKNKEHVLLKAKIIGYGNVSLGTNSISNVNLIEQFKERLALYNNNNRMDICVVRNTDDIKACGTAIGNQSMVNNPDNYKYLIGKAWKNIGISKTANGSKISVYYLGNSTPTEKGGNTTNLPTNTTSNVRSANNALAQNAPFAQPSATPNLVAINQHDFGTIESVFELANRSKDIDTLYANSGAQGRDLLQTLLIDSHDAGYARQMIDNTSTGEITKQLNAATTTLNNIASLEHKTSSLQTLSLSNAMILNSRLVNLSRRHTNNIDSFAQRLQALKDQKFASLESAAEVLYQFAPKYEKPTNVWANAIGGTSLNNGGNASLYGTSAGVDAYLNGEVEAIVGGFGSYGYSSFNNQANSLNSGANNTNFGVYSRIFANQHEFDFEAQGALGSDQSSLNFKSALLRDLNQSYNYLAYSAATRASYGYDFAFFRNALVLKPSVGVSYNHLGSTNFKSNSNQVALKNGSSSQHLFNASANVEARYYYGDTSYFYMNAGVLQEFANFGSSNAVSLNTFKVNAAHNPLSTHARVMMGGELKLAKEVFLNLGFVYLHNLISNIGHFASNLGMRYSF.

Positions 1–33 (MEIQQTHRKINRPLVSLALVGALVSITPQQSHA) are cleaved as a signal peptide. A disordered region spans residues 326–374 (PPEGGYKDKPKDKPSNTTQNNANNNQQNSAQNNSNTQVINPPNSAQKTE). Residues 330–339 (GYKDKPKDKP) show a composition bias toward basic and acidic residues. Positions 340–362 (SNTTQNNANNNQQNSAQNNSNTQ) are enriched in low complexity. Residues 363–374 (VINPPNSAQKTE) show a composition bias toward polar residues. One can recognise an Autotransporter domain in the interval 1018 to 1290 (KYEKPTNVWA…ASNLGMRYSF (273 aa)).

It localises to the periplasm. It is found in the secreted. The protein resides in the cell surface. Its subcellular location is the cell outer membrane. In terms of biological role, induces vacuolation of eukaryotic cells. Causes ulceration and gastric lesions. The protein is Vacuolating cytotoxin autotransporter (vacA) of Helicobacter pylori (strain ATCC 700392 / 26695) (Campylobacter pylori).